Consider the following 96-residue polypeptide: Maintenance of carboxysome distribution protein B (96 aa).

Residues 1 to 18 (MTNLEDKLSASIKTENKD) are compositionally biased toward basic and acidic residues. Positions 1-96 (MTNLEDKLSA…STHPRRVWPD (96 aa)) are disordered. Residues 59-74 (ARATTTKPAVSKSSKP) show a composition bias toward low complexity.

In terms of assembly, monomer, associates with McdA:DNA. Interacts with shell components of the carboxysome.

The protein localises to the carboxysome. Functionally, mcdA and McdB together mediate carboxysome positioning on the nucleoid and to prevent their aggregation in the cell. Undergoes liquid-liquid phase separation at pH 7.0 in the presence of crowders polyethylene glycol or Ficoll. McdA is an ATPase that forms dynamic gradients on the nucleoid in response to adapter protein McdB, which associates with carboxysomes. The interplay between McdA gradients on the nucleoid and McdB-bound carboxysomes result in the equal spacing of Cbs along the cell length. Stimulates the ATPase activity of McdA, causing McdA to be released from DNA. In terms of biological role, incorrect positioning (aggregation) of carboxysomes results in reduced CO(2) fixation by encapsulated form 1 ribulose-1,5-bisphosphate carboxylase (RuBisCO, cbbL/cbbS), which leads to slower growth. This chain is Maintenance of carboxysome distribution protein B, found in Halothiobacillus neapolitanus (strain ATCC 23641 / c2) (Thiobacillus neapolitanus).